The chain runs to 172 residues: uncharacterized protein (172 aa).

The next 4 helical transmembrane spans lie at 20–40 (LVLI…EYIF), 48–68 (CVYE…ALII), 76–96 (LILI…HSFV), and 146–166 (MTEY…LILF).

Its subcellular location is the cell membrane. This is an uncharacterized protein from Rickettsia prowazekii (strain Madrid E).